The chain runs to 490 residues: Probable alcohol acetyltransferase FCK4 (490 aa).

Belongs to the alcohol acetyltransferase FCK4 family.

Its pathway is secondary metabolite biosynthesis. Its function is as follows. Probable alcohol acetyltransferase; part of the gene cluster that mediates the biosynthesis of cytokinins such as fusatin, fusatinic acids or 8-oxofusatin, known for their growth promoting and anti-senescence activities toward host plants. FCK1 is a bifunctional enzyme that performs the first steps in the biosynthesis of Fusarium cytokinins. It first condenses adenosine monophosphate (AMP) with dimethylallyl diphosphate (DMAPP) to yield isoprenyl adenosine monophosphate. It then catalyzes the removal of the phosphoribose to produce isopentenylaldehyde. The cytochrome P450 monooxygenase then converts isopentenylaldehyde to trans-zeatin. A condensation step converts trans-zeatin to fusatin which is further modified to produce fusatinic acid. The mechanism for oxidation of fusatin to fusatinic acid remains unknown. 8-oxofusatin could be produced through several pathways, via direct oxygenation of fusatin, or via the 8-oxo-pentenyladenine intermediate which itself must arise from either the prenylation of 8-oxo-AMP by FCK1 and/or oxygenation of isopentenylaldehyde. Both the FCK3 and FCK4 enzymes act downstream of the identified cytokinins to produce yet unidentified compounds. In Fusarium pseudograminearum (strain CS3096) (Wheat and barley crown-rot fungus), this protein is Probable alcohol acetyltransferase FCK4.